We begin with the raw amino-acid sequence, 277 residues long: Ribosomal RNA small subunit methyltransferase G (277 aa).

S-adenosyl-L-methionine contacts are provided by residues G128, F133, 188 to 189, and R198; that span reads SE.

Belongs to the methyltransferase superfamily. RNA methyltransferase RsmG family.

The protein localises to the cytoplasm. It catalyses the reaction guanosine(527) in 16S rRNA + S-adenosyl-L-methionine = N(7)-methylguanosine(527) in 16S rRNA + S-adenosyl-L-homocysteine. In terms of biological role, specifically methylates the N7 position of guanine in position 527 of 16S rRNA. The protein is Ribosomal RNA small subunit methyltransferase G of Nitrobacter winogradskyi (strain ATCC 25391 / DSM 10237 / CIP 104748 / NCIMB 11846 / Nb-255).